The sequence spans 518 residues: Cytochrome P450 26C1 (518 aa).

The chain crosses the membrane as a helical span at residues 293–313 (LLFAAFFTTASASTSLILLLL). Cysteine 455 is a heme binding site.

Belongs to the cytochrome P450 family. The cofactor is heme.

The protein resides in the membrane. The catalysed reaction is an organic molecule + reduced [NADPH--hemoprotein reductase] + O2 = an alcohol + oxidized [NADPH--hemoprotein reductase] + H2O + H(+). The enzyme catalyses all-trans-retinoate + reduced [NADPH--hemoprotein reductase] + O2 = all-trans-4-hydroxyretinoate + oxidized [NADPH--hemoprotein reductase] + H2O + H(+). It catalyses the reaction all-trans-4-hydroxyretinoate + reduced [NADPH--hemoprotein reductase] + O2 = all-trans-4-oxoretinoate + oxidized [NADPH--hemoprotein reductase] + 2 H2O + H(+). It carries out the reaction 9-cis-retinoate + reduced [NADPH--hemoprotein reductase] + O2 = 9-cis-4-hydroxyretinoate + oxidized [NADPH--hemoprotein reductase] + H2O + H(+). The catalysed reaction is 9-cis-4-hydroxyretinoate + reduced [NADPH--hemoprotein reductase] + O2 = 9-cis-4-oxoretinoate + oxidized [NADPH--hemoprotein reductase] + 2 H2O + H(+). The enzyme catalyses all-trans-4-hydroxy-13,14-dihydroretinoate + reduced [NADPH--hemoprotein reductase] + O2 = all-trans-4-oxo-13,14-dihydroretinoate + oxidized [NADPH--hemoprotein reductase] + 2 H2O + H(+). It catalyses the reaction all-trans-13,14-dihydroretinoate + reduced [NADPH--hemoprotein reductase] + O2 = all-trans-4-hydroxy-13,14-dihydroretinoate + oxidized [NADPH--hemoprotein reductase] + H2O + H(+). Functionally, a cytochrome P450 monooxygenase involved in the metabolism of retinoates (RAs), the active metabolites of vitamin A, and critical signaling molecules in animals. RAs exist as at least four different isomers: all-trans-RA (atRA), 9-cis-RA, 13-cis-RA, and 9,13-dicis-RA, where atRA is considered to be the biologically active isomer, although 9-cis-RA and 13-cis-RA also have activity. Catalyzes the oxidation of atRA primarily at C-4. Oxidation of atRA limits its biological activity and initiates a degradative process leading to its eventual elimination, thereby contributes to the regulation of atRA homeostasis and signaling. Able to metabolize other RAs such as 9-cis with high efficiency. Can oxidize all-trans-13,14-dihydroretinoate (DRA) to metabolites which could include all-trans-4-oxo-DRA, all-trans-4-hydroxy-DRA, all-trans-5,8-epoxy-DRA, and all-trans-18-hydroxy-DRA. Shares sequence similarity with other CYP26 family members, but has higher affinity to 9-cis-RA and is much less sensitive to the inhibitory effects of ketoconazole. In cooperation with Cyp26a1, contributes to the CNS patterning and the development of regions of higher visual acuity. This Mus musculus (Mouse) protein is Cytochrome P450 26C1.